A 444-amino-acid polypeptide reads, in one-letter code: Glycine receptor subunit alphaZ1 (444 aa).

An N-terminal signal peptide occupies residues 1–24 (MFALGIYLWETIVFFSLAASQQAA). At 25–246 (ARKAASPMPP…RFHLERQMGY (222 aa)) the chain is on the extracellular side. N62 is a glycosylation site (N-linked (GlcNAc...) asparagine). The glycine site is built by R89 and S153. C162 and C176 form a disulfide bridge. E216 and D218 together coordinate Zn(2+). A disulfide bond links C222 and C233. Residue 226 to 231 (YNTGKF) participates in strychnine binding. T228 lines the glycine pocket. Residue H239 participates in Zn(2+) binding. The helical transmembrane segment at 247-268 (YLIQMYIPSLLIVILSWVSFWI) threads the bilayer. At 269–273 (NMDAA) the chain is on the cytoplasmic side. A helical membrane pass occupies residues 274-294 (PARVGLGITTVLTMTTQSSGS). Residues 295 to 305 (RASLPKVSYVK) lie on the Extracellular side of the membrane. A helical membrane pass occupies residues 306–326 (AIDIWMAVCLLFVFSALLEYA). At 327–412 (AVNFIARQHK…FISRAKRIDT (86 aa)) the chain is on the cytoplasmic side. A helical transmembrane segment spans residues 413-433 (VSRVAFPLVFLIFNIFYWITY). Residues 434-444 (KIIRSEDIHKQ) are Extracellular-facing.

This sequence belongs to the ligand-gated ion channel (TC 1.A.9) family. Glycine receptor (TC 1.A.9.3) subfamily. GLRA1 sub-subfamily. In terms of assembly, homopentamer (in vitro). Heteropentamer composed of glra1 and glrb. Both homopentamers and heteropentamers form functional ion channels. Interacts with glrb. In terms of tissue distribution, expressed in brain.

It localises to the postsynaptic cell membrane. The protein resides in the synapse. It is found in the perikaryon. Its subcellular location is the cell projection. The protein localises to the dendrite. It localises to the cell membrane. It catalyses the reaction chloride(in) = chloride(out). Its activity is regulated as follows. Activated by glycine and taurine. Inhibited by strychnine. Allosterically activated by ivermectin. Inhibited by picrotoxinin. Strychnine binding locks the channel in a closed conformation and prevents channel opening in response to extracellular glycine. Can also be activated by GABA and inhibited by bicuculline, but this requires heterologous expression in human cells. In terms of biological role, subunit of heteromeric glycine-gated chloride channels. Plays an important role in the down-regulation of neuronal excitability. Contributes to the generation of inhibitory postsynaptic currents. Channel activity is potentiated by ethanol. The polypeptide is Glycine receptor subunit alphaZ1 (glra1) (Danio rerio (Zebrafish)).